A 175-amino-acid polypeptide reads, in one-letter code: Arginine repressor (175 aa).

The tract at residues Met-1–Arg-23 is disordered.

This sequence belongs to the ArgR family.

The protein localises to the cytoplasm. It functions in the pathway amino-acid biosynthesis; L-arginine biosynthesis [regulation]. Regulates arginine biosynthesis genes. This Nocardia farcinica (strain IFM 10152) protein is Arginine repressor.